The chain runs to 309 residues: Glutaminase (309 aa).

Positions 64, 114, 160, 167, 191, 243, and 261 each coordinate substrate.

This sequence belongs to the glutaminase family. As to quaternary structure, homotetramer.

The catalysed reaction is L-glutamine + H2O = L-glutamate + NH4(+). In Rhizobium johnstonii (strain DSM 114642 / LMG 32736 / 3841) (Rhizobium leguminosarum bv. viciae), this protein is Glutaminase.